Reading from the N-terminus, the 172-residue chain is MPPKRRQAEDTSDAEPQYTKKSKGNTGKAQPQELTKGSDQDGNTFWELGNNRRISSSVFRNTTLVNIREYYDAGGKLMPGKKGISLSLAQYQNLLKVIPQLNADLRAQGHAIEDPGFAQVAEQTDAPIETPKVKALESNKESIKKEKKKPRKSNIDVTSDEEEAAEDEDDDE.

Disordered regions lie at residues 1-43 and 123-172; these read MPPK…QDGN and QTDA…DDDE. Over residues 24 to 43 the composition is skewed to polar residues; that stretch reads GNTGKAQPQELTKGSDQDGN. Residues 131–144 show a composition bias toward basic and acidic residues; sequence PKVKALESNKESIK. Residues 158 to 172 are compositionally biased toward acidic residues; the sequence is TSDEEEAAEDEDDDE.

This sequence belongs to the transcriptional coactivator PC4 family.

It is found in the nucleus. Its function is as follows. General coactivator that functions cooperatively with TAFs and mediates functional interactions between upstream activators and the general transcriptional machinery. Binds single-stranded DNA. This Neurospora crassa (strain ATCC 24698 / 74-OR23-1A / CBS 708.71 / DSM 1257 / FGSC 987) protein is Putative RNA polymerase II transcriptional coactivator.